A 187-amino-acid polypeptide reads, in one-letter code: Reactive Intermediate Deaminase A, chloroplastic (187 aa).

Residues Met-1–Ser-58 constitute a chloroplast transit peptide. Substrate is bound at residue Arg-165.

Belongs to the RutC family. As to expression, expressed in leaves, petiols, petals, carpels and shoot apex.

It localises to the plastid. The protein resides in the chloroplast. It catalyses the reaction 2-iminobutanoate + H2O = 2-oxobutanoate + NH4(+). It carries out the reaction 2-iminopropanoate + H2O = pyruvate + NH4(+). Its pathway is amino-acid biosynthesis; L-isoleucine biosynthesis; 2-oxobutanoate from L-threonine. In terms of biological role, hydrolyzes the Ser-derived enamine/imine product of Thr dehydratase, protecting the plastidial branched-chain aminotransferase BCAT3 (AC Q9M401) from inactivation. Involved in Ile biosynthesis. The polypeptide is Reactive Intermediate Deaminase A, chloroplastic (Arabidopsis thaliana (Mouse-ear cress)).